The sequence spans 157 residues: Transcriptional repressor NrdR (157 aa).

A zinc finger lies at 3 to 34 (CPFCGFADTRVIDSRLGKEGNNIRRRRECSQC). In terms of domain architecture, ATP-cone spans 49 to 139 (PLIIKKDARR…VYRQFKDINE (91 aa)).

This sequence belongs to the NrdR family. Zn(2+) serves as cofactor.

Negatively regulates transcription of bacterial ribonucleotide reductase nrd genes and operons by binding to NrdR-boxes. The chain is Transcriptional repressor NrdR from Syntrophotalea carbinolica (strain DSM 2380 / NBRC 103641 / GraBd1) (Pelobacter carbinolicus).